A 408-amino-acid chain; its full sequence is Peptidase T (408 aa).

Residue His-78 participates in Zn(2+) binding. Asp-80 is an active-site residue. Asp-140 provides a ligand contact to Zn(2+). The active-site Proton acceptor is Glu-174. Zn(2+) is bound by residues Glu-175, Asp-197, and His-379.

Belongs to the peptidase M20B family. Zn(2+) is required as a cofactor.

It is found in the cytoplasm. It carries out the reaction Release of the N-terminal residue from a tripeptide.. Its function is as follows. Cleaves the N-terminal amino acid of tripeptides. This is Peptidase T from Staphylococcus aureus (strain bovine RF122 / ET3-1).